A 246-amino-acid chain; its full sequence is tRNA pseudouridine synthase A (246 aa).

D53 functions as the Nucleophile in the catalytic mechanism. Position 111 (Y111) interacts with substrate.

Belongs to the tRNA pseudouridine synthase TruA family. As to quaternary structure, homodimer.

It carries out the reaction uridine(38/39/40) in tRNA = pseudouridine(38/39/40) in tRNA. In terms of biological role, formation of pseudouridine at positions 38, 39 and 40 in the anticodon stem and loop of transfer RNAs. The protein is tRNA pseudouridine synthase A of Anoxybacillus flavithermus (strain DSM 21510 / WK1).